The sequence spans 137 residues: Large ribosomal subunit protein uL16 (137 aa).

The protein belongs to the universal ribosomal protein uL16 family. In terms of assembly, part of the 50S ribosomal subunit.

In terms of biological role, binds 23S rRNA and is also seen to make contacts with the A and possibly P site tRNAs. The chain is Large ribosomal subunit protein uL16 from Acinetobacter baylyi (strain ATCC 33305 / BD413 / ADP1).